The chain runs to 49 residues: Photosystem II reaction center protein K (49 aa).

Residues 1–12 (MISSIHLRKLLG) constitute a propeptide that is removed on maturation. Residues 24–44 (IIDVLPIIPVLFLLLAFVWQA) traverse the membrane as a helical segment.

Belongs to the PsbK family. As to quaternary structure, PSII is composed of 1 copy each of membrane proteins PsbA, PsbB, PsbC, PsbD, PsbE, PsbF, PsbH, PsbI, PsbJ, PsbK, PsbL, PsbM, PsbT, PsbX, PsbY, PsbZ, Psb30/Ycf12, at least 3 peripheral proteins of the oxygen-evolving complex and a large number of cofactors. It forms dimeric complexes.

The protein resides in the plastid. It is found in the chloroplast thylakoid membrane. In terms of biological role, one of the components of the core complex of photosystem II (PSII). PSII is a light-driven water:plastoquinone oxidoreductase that uses light energy to abstract electrons from H(2)O, generating O(2) and a proton gradient subsequently used for ATP formation. It consists of a core antenna complex that captures photons, and an electron transfer chain that converts photonic excitation into a charge separation. The sequence is that of Photosystem II reaction center protein K from Phacus acuminatus.